Consider the following 316-residue polypeptide: uncharacterized protein (316 aa).

The HTH lacI-type domain maps to methionine 1 to glutamine 56. The H-T-H motif DNA-binding region spans leucine 4–asparagine 23.

This is an uncharacterized protein from Bacillus subtilis (strain 168).